A 478-amino-acid polypeptide reads, in one-letter code: Sodium-dependent phosphate transport protein 3 (478 aa).

Residues Asn-28, Asn-47, Asn-56, and Asn-69 are each glycosylated (N-linked (GlcNAc...) asparagine). The next 10 helical transmembrane spans lie at 98-118, 130-150, 183-203, 211-231, 273-293, 317-337, 341-361, 363-383, 405-425, and 442-462; these read ISYG…IFGA, SLLT…VIVI, SIAG…GGLI, FIFY…FTVI, LPLW…TIII, LPFI…DFLL, LLSL…LPSL, AVAL…LILI, YASF…IISS, and NVFF…LIFG.

The protein belongs to the major facilitator superfamily. Sodium/anion cotransporter family. Expressed in the liver, kidney, placenta, lung and thyroid (at protein level).

The protein resides in the apical cell membrane. The enzyme catalyses 3 Na(+)(out) + phosphate(out) = 3 Na(+)(in) + phosphate(in). It catalyses the reaction urate(out) + n chloride(in) = urate(in) + n chloride(out). In terms of biological role, acts as a membrane potential-dependent organic anion transporter, the transport requires a low concentration of chloride ions. Mediates chloride-dependent transport of urate. Can actively transport inorganic phosphate into cells via Na(+) cotransport. This Mus musculus (Mouse) protein is Sodium-dependent phosphate transport protein 3 (Slc17a2).